The primary structure comprises 103 residues: Co-chaperonin GroES (103 aa).

The protein belongs to the GroES chaperonin family. As to quaternary structure, heptamer of 7 subunits arranged in a ring. Interacts with the chaperonin GroEL.

Its subcellular location is the cytoplasm. Its function is as follows. Together with the chaperonin GroEL, plays an essential role in assisting protein folding. The GroEL-GroES system forms a nano-cage that allows encapsulation of the non-native substrate proteins and provides a physical environment optimized to promote and accelerate protein folding. GroES binds to the apical surface of the GroEL ring, thereby capping the opening of the GroEL channel. In Prochlorococcus marinus (strain MIT 9215), this protein is Co-chaperonin GroES.